A 329-amino-acid chain; its full sequence is Cytochrome f (329 aa).

The N-terminal stretch at 1–44 is a signal peptide; that stretch reads MKRNIIFLVIHQFENLTMKKKQNIFFIFLLTVFFNFTVNSNVSA. The heme site is built by Tyr45, Cys65, Cys68, and His69. Residues 295–315 traverse the membrane as a helical segment; the sequence is VQGLIIFLITIFITQLFLVLK.

It belongs to the cytochrome f family. In terms of assembly, the 4 large subunits of the cytochrome b6-f complex are cytochrome b6, subunit IV (17 kDa polypeptide, petD), cytochrome f and the Rieske protein, while the 4 small subunits are PetG, PetL, PetM and PetN. The complex functions as a dimer. The cofactor is heme.

Its subcellular location is the plastid. The protein resides in the chloroplast thylakoid membrane. In terms of biological role, component of the cytochrome b6-f complex, which mediates electron transfer between photosystem II (PSII) and photosystem I (PSI), cyclic electron flow around PSI, and state transitions. This is Cytochrome f from Tupiella akineta (Green alga).